The sequence spans 295 residues: Pyridoxal 5'-phosphate synthase subunit PdxS (295 aa).

D25 is a D-ribose 5-phosphate binding site. Catalysis depends on K82, which acts as the Schiff-base intermediate with D-ribose 5-phosphate. Residue G154 coordinates D-ribose 5-phosphate. Position 166 (R166) interacts with D-glyceraldehyde 3-phosphate. D-ribose 5-phosphate is bound by residues G215 and 236-237 (GS).

This sequence belongs to the PdxS/SNZ family. As to quaternary structure, in the presence of PdxT, forms a dodecamer of heterodimers.

It carries out the reaction aldehydo-D-ribose 5-phosphate + D-glyceraldehyde 3-phosphate + L-glutamine = pyridoxal 5'-phosphate + L-glutamate + phosphate + 3 H2O + H(+). It functions in the pathway cofactor biosynthesis; pyridoxal 5'-phosphate biosynthesis. Catalyzes the formation of pyridoxal 5'-phosphate from ribose 5-phosphate (RBP), glyceraldehyde 3-phosphate (G3P) and ammonia. The ammonia is provided by the PdxT subunit. Can also use ribulose 5-phosphate and dihydroxyacetone phosphate as substrates, resulting from enzyme-catalyzed isomerization of RBP and G3P, respectively. This is Pyridoxal 5'-phosphate synthase subunit PdxS from Listeria welshimeri serovar 6b (strain ATCC 35897 / DSM 20650 / CCUG 15529 / CIP 8149 / NCTC 11857 / SLCC 5334 / V8).